We begin with the raw amino-acid sequence, 31 residues long: Photosystem I reaction center subunit XII (31 aa).

The helical transmembrane segment at 7 to 26 (QVYVALVIALLPAVLAFRLS) threads the bilayer.

The protein belongs to the PsaM family.

It localises to the cellular thylakoid membrane. The polypeptide is Photosystem I reaction center subunit XII (Thermosynechococcus vestitus (strain NIES-2133 / IAM M-273 / BP-1)).